A 72-amino-acid polypeptide reads, in one-letter code: uncharacterized protein (72 aa).

The chain crosses the membrane as a helical span at residues tryptophan 11–phenylalanine 31.

It is found in the membrane. This is an uncharacterized protein from Saccharomyces cerevisiae (strain ATCC 204508 / S288c) (Baker's yeast).